The following is a 211-amino-acid chain: Large ribosomal subunit protein uL4 (211 aa).

Residues 40 to 80 (QQAHSRQGTASTLTRSEVRGGGRKPYKQKGTGRARQGSIRT) form a disordered region. Residues 41-54 (QAHSRQGTASTLTR) are compositionally biased toward polar residues. A compositionally biased stretch (basic residues) spans 60 to 71 (GGRKPYKQKGTG).

Belongs to the universal ribosomal protein uL4 family. Part of the 50S ribosomal subunit.

Its function is as follows. One of the primary rRNA binding proteins, this protein initially binds near the 5'-end of the 23S rRNA. It is important during the early stages of 50S assembly. It makes multiple contacts with different domains of the 23S rRNA in the assembled 50S subunit and ribosome. Forms part of the polypeptide exit tunnel. The polypeptide is Large ribosomal subunit protein uL4 (Prochlorococcus marinus (strain MIT 9211)).